Reading from the N-terminus, the 264-residue chain is Ribonuclease HII (264 aa).

In terms of domain architecture, RNase H type-2 spans 33–224; it reads GPVAGVDEVG…VRRVASGSNT (192 aa). Positions 39, 40, and 133 each coordinate a divalent metal cation. The interval 222-264 is disordered; it reads SNTAEVADGQPDPRDGTAQTGEGRWSKSSHPATMRATGRAQGT.

It belongs to the RNase HII family. Mn(2+) is required as a cofactor. The cofactor is Mg(2+).

It is found in the cytoplasm. The enzyme catalyses Endonucleolytic cleavage to 5'-phosphomonoester.. Its function is as follows. Endonuclease that specifically degrades the RNA of RNA-DNA hybrids. The sequence is that of Ribonuclease HII from Mycobacterium bovis (strain ATCC BAA-935 / AF2122/97).